A 273-amino-acid chain; its full sequence is Dermonecrotic toxin LhSicTox-alphaIA1iii (273 aa).

His-5 is a catalytic residue. Mg(2+)-binding residues include Glu-25 and Asp-27. The Nucleophile role is filled by His-41. 2 cysteine pairs are disulfide-bonded: Cys-45/Cys-51 and Cys-47/Cys-190. A Mg(2+)-binding site is contributed by Asp-85.

It belongs to the arthropod phospholipase D family. Class II subfamily. It depends on Mg(2+) as a cofactor. As to expression, expressed by the venom gland.

It is found in the secreted. The enzyme catalyses an N-(acyl)-sphingosylphosphocholine = an N-(acyl)-sphingosyl-1,3-cyclic phosphate + choline. The catalysed reaction is an N-(acyl)-sphingosylphosphoethanolamine = an N-(acyl)-sphingosyl-1,3-cyclic phosphate + ethanolamine. It carries out the reaction a 1-acyl-sn-glycero-3-phosphocholine = a 1-acyl-sn-glycero-2,3-cyclic phosphate + choline. It catalyses the reaction a 1-acyl-sn-glycero-3-phosphoethanolamine = a 1-acyl-sn-glycero-2,3-cyclic phosphate + ethanolamine. Dermonecrotic toxins cleave the phosphodiester linkage between the phosphate and headgroup of certain phospholipids (sphingolipid and lysolipid substrates), forming an alcohol (often choline) and a cyclic phosphate. This toxin acts on sphingomyelin (SM). It may also act on ceramide phosphoethanolamine (CPE), lysophosphatidylcholine (LPC) and lysophosphatidylethanolamine (LPE), but not on lysophosphatidylserine (LPS), and lysophosphatidylglycerol (LPG). It acts by transphosphatidylation, releasing exclusively cyclic phosphate products as second products. Induces dermonecrosis, hemolysis, increased vascular permeability, edema, inflammatory response, and platelet aggregation. The chain is Dermonecrotic toxin LhSicTox-alphaIA1iii from Loxosceles hirsuta (Recluse spider).